Reading from the N-terminus, the 266-residue chain is Large ribosomal subunit protein eL8 (266 aa).

Glycyl lysine isopeptide (Lys-Gly) (interchain with G-Cter in SUMO2) cross-links involve residues lysine 11, lysine 20, and lysine 21. Residue lysine 34 is modified to N6-acetyllysine. A Glycyl lysine isopeptide (Lys-Gly) (interchain with G-Cter in SUMO2) cross-link involves residue lysine 48. Position 97 is an N6-acetyllysine; alternate (lysine 97). Lysine 97 is covalently cross-linked (Glycyl lysine isopeptide (Lys-Gly) (interchain with G-Cter in SUMO2); alternate). Lysine 125 participates in a covalent cross-link: Glycyl lysine isopeptide (Lys-Gly) (interchain with G-Cter in SUMO2). N6-acetyllysine is present on lysine 217. A Glycyl lysine isopeptide (Lys-Gly) (interchain with G-Cter in SUMO2) cross-link involves residue lysine 245.

This sequence belongs to the eukaryotic ribosomal protein eL8 family. In terms of assembly, component of the large ribosomal subunit. Interacts with CRY1. Interacts with DICER1, AGO2, TARBP2, MOV10 and EIF6; they form a large RNA-induced silencing complex (RISC).

The protein resides in the cytoplasm. Functionally, component of the large ribosomal subunit. The ribosome is a large ribonucleoprotein complex responsible for the synthesis of proteins in the cell. The sequence is that of Large ribosomal subunit protein eL8 (Rpl7a) from Rattus norvegicus (Rat).